We begin with the raw amino-acid sequence, 135 residues long: Protein PsiE homolog (135 aa).

Helical transmembrane passes span V20–L40, Y54–V74, H82–V102, and P107–A127.

It belongs to the PsiE family.

It is found in the cell inner membrane. The protein is Protein PsiE homolog of Yersinia pseudotuberculosis serotype IB (strain PB1/+).